A 695-amino-acid chain; its full sequence is N-terminal acetyltransferase A complex subunit-like protein C418.02 (695 aa).

TPR repeat units follow at residues 8-41, 43-75, 76-109, 111-143, 145-177, 217-250, 262-296, 365-398, 399-432, and 477-510; these read EAFLFDRSIDQFEKGQYSKSLKTIQSVLKKKPKH, DSVALLGLNLCKLHDSRSALLKCGYASSIDPKS, QFCWHALAIVYRETKDYNNSLKCYQNALAISPNN, SLWYDAAYLQAQLGLYQPLFDNWNRLLQLDSSN, EYRLCFTLSAFLSGNYKESLEQIQYLISSCNLS, FNFEHIKADFAFRQKNYEESIYLYARLLIKFPNR, WNFYKSGGLALDLLLKRTDSLIKTFSEILQTGISV, LWCTYCLCLAHYKLGDYEESNYWLNLAIDHTPTY, PELFLAKAKIFLCMGEIEEALCSFKRSVELDKSD, and VWFLVEDGESLLRQKLYGLALKRFHSIYQIYKKW.

As to quaternary structure, component of the N-terminal acetyltransferase A (NatA) complex.

The protein resides in the cytoplasm. It is found in the nucleus. Functionally, non-catalytic component of the NatA N-terminal acetyltransferase, which catalyzes acetylation of proteins beginning with Met-Ser, Met-Gly and Met-Ala. N-acetylation plays a role in normal eukaryotic translation and processing, protect against proteolytic degradation and protein turnover. The protein is N-terminal acetyltransferase A complex subunit-like protein C418.02 of Schizosaccharomyces pombe (strain 972 / ATCC 24843) (Fission yeast).